Consider the following 411-residue polypeptide: Glutamate dehydrogenase 1, mitochondrial (411 aa).

A mitochondrion-targeting transit peptide spans 1–18 (MNALAATSRNFKQAAKLL). Residue K102 is part of the active site.

The protein belongs to the Glu/Leu/Phe/Val dehydrogenases family.

It is found in the mitochondrion. It carries out the reaction L-glutamate + NAD(+) + H2O = 2-oxoglutarate + NH4(+) + NADH + H(+). The catalysed reaction is L-glutamate + NADP(+) + H2O = 2-oxoglutarate + NH4(+) + NADPH + H(+). This chain is Glutamate dehydrogenase 1, mitochondrial (GDH1), found in Oryza sativa subsp. indica (Rice).